Here is a 356-residue protein sequence, read N- to C-terminus: Holliday junction branch migration complex subunit RuvB (356 aa).

Over residues 1 to 14 (MAIVSSITNHSSLP) the composition is skewed to polar residues. The interval 1–20 (MAIVSSITNHSSLPNDKGEE) is disordered. Residues 13 to 201 (LPNDKGEERL…FGITQRLDFY (189 aa)) form a large ATPase domain (RuvB-L) region. Leucine 40, arginine 41, glycine 82, lysine 85, threonine 86, threonine 87, arginine 191, tyrosine 201, and arginine 238 together coordinate ATP. Threonine 86 lines the Mg(2+) pocket. Residues 202–273 (NYLDLENIIK…VVNDALDLHR (72 aa)) form a small ATPAse domain (RuvB-S) region. The segment at 276 to 356 (QRGLDATDRS…LLTSPNNIDK (81 aa)) is head domain (RuvB-H). Residues arginine 331 and arginine 336 each contribute to the DNA site.

It belongs to the RuvB family. In terms of assembly, homohexamer. Forms an RuvA(8)-RuvB(12)-Holliday junction (HJ) complex. HJ DNA is sandwiched between 2 RuvA tetramers; dsDNA enters through RuvA and exits via RuvB. An RuvB hexamer assembles on each DNA strand where it exits the tetramer. Each RuvB hexamer is contacted by two RuvA subunits (via domain III) on 2 adjacent RuvB subunits; this complex drives branch migration. In the full resolvosome a probable DNA-RuvA(4)-RuvB(12)-RuvC(2) complex forms which resolves the HJ.

It localises to the cytoplasm. The catalysed reaction is ATP + H2O = ADP + phosphate + H(+). The RuvA-RuvB-RuvC complex processes Holliday junction (HJ) DNA during genetic recombination and DNA repair, while the RuvA-RuvB complex plays an important role in the rescue of blocked DNA replication forks via replication fork reversal (RFR). RuvA specifically binds to HJ cruciform DNA, conferring on it an open structure. The RuvB hexamer acts as an ATP-dependent pump, pulling dsDNA into and through the RuvAB complex. RuvB forms 2 homohexamers on either side of HJ DNA bound by 1 or 2 RuvA tetramers; 4 subunits per hexamer contact DNA at a time. Coordinated motions by a converter formed by DNA-disengaged RuvB subunits stimulates ATP hydrolysis and nucleotide exchange. Immobilization of the converter enables RuvB to convert the ATP-contained energy into a lever motion, pulling 2 nucleotides of DNA out of the RuvA tetramer per ATP hydrolyzed, thus driving DNA branch migration. The RuvB motors rotate together with the DNA substrate, which together with the progressing nucleotide cycle form the mechanistic basis for DNA recombination by continuous HJ branch migration. Branch migration allows RuvC to scan DNA until it finds its consensus sequence, where it cleaves and resolves cruciform DNA. The protein is Holliday junction branch migration complex subunit RuvB of Prochlorococcus marinus (strain NATL2A).